Here is a 225-residue protein sequence, read N- to C-terminus: NAD(P)H-quinone oxidoreductase subunit K, chloroplastic (225 aa).

Cys-43, Cys-44, Cys-108, and Cys-139 together coordinate [4Fe-4S] cluster.

It belongs to the complex I 20 kDa subunit family. In terms of assembly, NDH is composed of at least 16 different subunits, 5 of which are encoded in the nucleus. Requires [4Fe-4S] cluster as cofactor.

Its subcellular location is the plastid. It is found in the chloroplast thylakoid membrane. The enzyme catalyses a plastoquinone + NADH + (n+1) H(+)(in) = a plastoquinol + NAD(+) + n H(+)(out). It carries out the reaction a plastoquinone + NADPH + (n+1) H(+)(in) = a plastoquinol + NADP(+) + n H(+)(out). Functionally, NDH shuttles electrons from NAD(P)H:plastoquinone, via FMN and iron-sulfur (Fe-S) centers, to quinones in the photosynthetic chain and possibly in a chloroplast respiratory chain. The immediate electron acceptor for the enzyme in this species is believed to be plastoquinone. Couples the redox reaction to proton translocation, and thus conserves the redox energy in a proton gradient. This Vitis vinifera (Grape) protein is NAD(P)H-quinone oxidoreductase subunit K, chloroplastic.